Here is a 297-residue protein sequence, read N- to C-terminus: Large ribosomal subunit protein uL18 (297 aa).

An N-acetylglycine modification is found at Gly2. Residues Lys5 and Lys48 each carry the N6-acetyllysine modification. A Phosphoserine modification is found at Ser185. Lys220 is subject to N6-acetyllysine; alternate. Residue Lys220 forms a Glycyl lysine isopeptide (Lys-Gly) (interchain with G-Cter in SUMO1); alternate linkage. Residue Lys220 forms a Glycyl lysine isopeptide (Lys-Gly) (interchain with G-Cter in SUMO2); alternate linkage. Thr232 bears the Phosphothreonine mark. The segment at 253–297 (YEKKPKKEVKKKRWNRPKMSLAQKKDRVAQKKASFLRAQERAAES) is disordered. Basic residues predominate over residues 258 to 268 (KKEVKKKRWNR). Position 272 is a phosphoserine (Ser272).

This sequence belongs to the universal ribosomal protein uL18 family. In terms of assembly, component of the large ribosomal subunit (LSU). Part of the 5S RNP complex, which is a LSU subcomplex composed of the 5S RNA, RPL5 and RPL11. Component of a hexameric 5S RNP precursor complex, composed of 5S RNA, RRS1, RPF2/BXDC1, RPL5, RPL11 and HEATR3; this complex acts as a precursor for ribosome assembly. Interacts with isoform 1 of NVL in an ATP-dependent manner. Interacts with RRP1B. Interacts with IPO5, IPO7 and KPNB1; these interactions may be involved in RPL5 nuclear import for the assembly of ribosomal subunits.

It is found in the cytoplasm. Its subcellular location is the nucleus. The protein resides in the nucleolus. Component of the ribosome, a large ribonucleoprotein complex responsible for the synthesis of proteins in the cell. The small ribosomal subunit (SSU) binds messenger RNAs (mRNAs) and translates the encoded message by selecting cognate aminoacyl-transfer RNA (tRNA) molecules. The large subunit (LSU) contains the ribosomal catalytic site termed the peptidyl transferase center (PTC), which catalyzes the formation of peptide bonds, thereby polymerizing the amino acids delivered by tRNAs into a polypeptide chain. The nascent polypeptides leave the ribosome through a tunnel in the LSU and interact with protein factors that function in enzymatic processing, targeting, and the membrane insertion of nascent chains at the exit of the ribosomal tunnel. As part of the 5S RNP/5S ribonucleoprotein particle it is an essential component of the LSU, required for its formation and the maturation of rRNAs. It also couples ribosome biogenesis to p53/TP53 activation. As part of the 5S RNP it accumulates in the nucleoplasm and inhibits MDM2, when ribosome biogenesis is perturbed, mediating the stabilization and the activation of TP53. This is Large ribosomal subunit protein uL18 (RPL5) from Homo sapiens (Human).